A 557-amino-acid polypeptide reads, in one-letter code: MSQRMQQGQPMIIMGEDAQRVKDRDAQEYNIRAARAVAEAVRSTLGPKGMDKMLVDSMGDVTITNDGVTILKEMDIDNPTAEMIVEVAETQEDEAGDGTTTAVAIAGELLKNAEDLLEQDIHPTAIIRGFNLASEKAREEIDDIAERVDPDDEELLKKVAETSMTGKSSELNKELLADLIVRAVRQVTVEANDGSHVVDLENVSIETQTGRSASESELLTGAVIDKDPVHDDMPVQFDEADVLLLNEPVEVEETDIDTNVSIESPDQLQKFLDQEEAQLKQKVDQIVDSGADVVFCQKGIDDLAQHYLAKQGILAVRRTKKSDIRFLKNITGAAVVSDLDSIEAAVLGRASVRRDEAGELFYVEGIGDDVHGVTLLLRGSTDHVVDELERGVQDALDVVASTVADGRVLAGGGAIEVELASRLRNYADSVSGREQLAVEAYADALELVPRVLAENAGLDSIDTLVDLRAAHEDGQVRAGLNVFTGEVEDAFDAGVVETAHAKEQAVASASEAANLVLKIDDIIAAGDLSTGGDDDEEGGAPGGMGGMGGMGGMGGAM.

Residues Asp527 to Met557 form a disordered region. A compositionally biased stretch (gly residues) spans Gly539–Met557.

Belongs to the TCP-1 chaperonin family. As to quaternary structure, the thermosome or CCT complex is a oligomeric complex of two octameric double-ring structures; the complex is probably a heterooligomer of CCT1, CCT2 and CCT3 with yet unknown stoichiometry.

In terms of biological role, molecular chaperone that assists in the folding or refolding of nascent or denatured proteins along with ATP hydrolysis. ATPase activity is highest in thermosome assemblies containing CCT1:CCT2, followed by assemblies containing CCT1:CCT2:CCT3. Seems to contribute to thermosome ATPase activity. Not required for growth. The sequence is that of Thermosome subunit 2 (cct2) from Haloferax volcanii (strain ATCC 29605 / DSM 3757 / JCM 8879 / NBRC 14742 / NCIMB 2012 / VKM B-1768 / DS2) (Halobacterium volcanii).